We begin with the raw amino-acid sequence, 472 residues long: Phenylalanine--tRNA ligase, mitochondrial (472 aa).

Residues 157-160 (SAHQ), R179, 186-188 (QHY), and 193-195 (QLE) contribute to the substrate site. An N6-acetyllysine modification is found at K202. Substrate contacts are provided by E287 and F312. One can recognise an FDX-ACB domain in the interval 379–471 (SKYPAVFNDI…AVQLLGVEGR (93 aa)).

Belongs to the class-II aminoacyl-tRNA synthetase family. In terms of assembly, monomer. In terms of tissue distribution, mainly expressed in the Purkinje cell of cerebellum.

It localises to the mitochondrion matrix. It is found in the mitochondrion. The catalysed reaction is tRNA(Phe) + L-phenylalanine + ATP = L-phenylalanyl-tRNA(Phe) + AMP + diphosphate + H(+). Is responsible for the charging of tRNA(Phe) with phenylalanine in mitochondrial translation. To a lesser extent, also catalyzes direct attachment of m-Tyr (an oxidized version of Phe) to tRNA(Phe), thereby opening the way for delivery of the misacylated tRNA to the ribosome and incorporation of ROS-damaged amino acid into proteins. The sequence is that of Phenylalanine--tRNA ligase, mitochondrial (Fars2) from Rattus norvegicus (Rat).